Consider the following 233-residue polypeptide: Large ribosomal subunit protein uL1 (233 aa).

This sequence belongs to the universal ribosomal protein uL1 family. As to quaternary structure, part of the 50S ribosomal subunit.

Binds directly to 23S rRNA. The L1 stalk is quite mobile in the ribosome, and is involved in E site tRNA release. Functionally, protein L1 is also a translational repressor protein, it controls the translation of the L11 operon by binding to its mRNA. The sequence is that of Large ribosomal subunit protein uL1 from Brucella melitensis biotype 1 (strain ATCC 23456 / CCUG 17765 / NCTC 10094 / 16M).